We begin with the raw amino-acid sequence, 248 residues long: NAD(P)H-quinone oxidoreductase subunit K 1 (248 aa).

A propeptide spanning residues 1–2 (MS) is cleaved from the precursor. C62, C63, C127, and C158 together coordinate [4Fe-4S] cluster. The segment at 228–248 (MGMPVPPALTTSQQKEQLNRG) is disordered. Over residues 236–248 (LTTSQQKEQLNRG) the composition is skewed to polar residues.

This sequence belongs to the complex I 20 kDa subunit family. As to quaternary structure, NDH-1 can be composed of about 15 different subunits; different subcomplexes with different compositions have been identified which probably have different functions. It depends on [4Fe-4S] cluster as a cofactor.

It is found in the cellular thylakoid membrane. The enzyme catalyses a plastoquinone + NADH + (n+1) H(+)(in) = a plastoquinol + NAD(+) + n H(+)(out). The catalysed reaction is a plastoquinone + NADPH + (n+1) H(+)(in) = a plastoquinol + NADP(+) + n H(+)(out). Functionally, NDH-1 shuttles electrons from an unknown electron donor, via FMN and iron-sulfur (Fe-S) centers, to quinones in the respiratory and/or the photosynthetic chain. The immediate electron acceptor for the enzyme in this species is believed to be plastoquinone. Couples the redox reaction to proton translocation, and thus conserves the redox energy in a proton gradient. Cyanobacterial NDH-1 also plays a role in inorganic carbon-concentration. The protein is NAD(P)H-quinone oxidoreductase subunit K 1 of Synechocystis sp. (strain ATCC 27184 / PCC 6803 / Kazusa).